A 103-amino-acid chain; its full sequence is Large ribosomal subunit protein uL23 (103 aa).

It belongs to the universal ribosomal protein uL23 family. Part of the 50S ribosomal subunit. Contacts protein L29, and trigger factor when it is bound to the ribosome.

One of the early assembly proteins it binds 23S rRNA. One of the proteins that surrounds the polypeptide exit tunnel on the outside of the ribosome. Forms the main docking site for trigger factor binding to the ribosome. This Chlorobaculum tepidum (strain ATCC 49652 / DSM 12025 / NBRC 103806 / TLS) (Chlorobium tepidum) protein is Large ribosomal subunit protein uL23.